Consider the following 309-residue polypeptide: Ribosomal RNA small subunit methyltransferase H (309 aa).

S-adenosyl-L-methionine contacts are provided by residues G41–H43, D61, F85, D102, and Q109.

This sequence belongs to the methyltransferase superfamily. RsmH family.

The protein resides in the cytoplasm. The catalysed reaction is cytidine(1402) in 16S rRNA + S-adenosyl-L-methionine = N(4)-methylcytidine(1402) in 16S rRNA + S-adenosyl-L-homocysteine + H(+). In terms of biological role, specifically methylates the N4 position of cytidine in position 1402 (C1402) of 16S rRNA. This Albidiferax ferrireducens (strain ATCC BAA-621 / DSM 15236 / T118) (Rhodoferax ferrireducens) protein is Ribosomal RNA small subunit methyltransferase H.